A 293-amino-acid chain; its full sequence is 33 kDa chaperonin (293 aa).

Disulfide bonds link cysteine 231–cysteine 233 and cysteine 264–cysteine 267.

It belongs to the HSP33 family. In terms of processing, under oxidizing conditions two disulfide bonds are formed involving the reactive cysteines. Under reducing conditions zinc is bound to the reactive cysteines and the protein is inactive.

The protein localises to the cytoplasm. Redox regulated molecular chaperone. Protects both thermally unfolding and oxidatively damaged proteins from irreversible aggregation. Plays an important role in the bacterial defense system toward oxidative stress. In Yersinia pseudotuberculosis serotype O:1b (strain IP 31758), this protein is 33 kDa chaperonin.